The sequence spans 1175 residues: DNA-directed RNA polymerase subunit beta (1175 aa).

A disordered region spans residues 12-33 (QSKTDRPQSSSNGSSSLNGSVP). Positions 20-31 (SSSNGSSSLNGS) are enriched in low complexity.

Belongs to the RNA polymerase beta chain family. In terms of assembly, the RNAP catalytic core consists of 2 alpha, 1 beta, 1 beta' and 1 omega subunit. When a sigma factor is associated with the core the holoenzyme is formed, which can initiate transcription.

It carries out the reaction RNA(n) + a ribonucleoside 5'-triphosphate = RNA(n+1) + diphosphate. DNA-dependent RNA polymerase catalyzes the transcription of DNA into RNA using the four ribonucleoside triphosphates as substrates. This is DNA-directed RNA polymerase subunit beta from Mycobacterium avium (strain 104).